A 545-amino-acid chain; its full sequence is Serine/threonine-protein kinase PAK 1 (545 aa).

Residues 1–75 are disordered; it reads MSNNGVDIQD…KKREKERPEI (75 aa). At S2 the chain carries N-acetylserine. S21 carries the phosphoserine; by PKB and autocatalysis modification. The residue at position 57 (S57) is a Phosphoserine; by autocatalysis. The interval 70-140 is autoregulatory region; it reads KERPEISLPS…YNSKKTSNSK (71 aa). Residues 75–88 enclose the CRIB domain; the sequence is ISLPSDFEHTIHVG. Residues 75 to 105 are GTPase-binding; it reads ISLPSDFEHTIHVGFDAVTGEFTGMPEQWAR. T84 is modified (phosphothreonine; by OXSR1). S115 is modified (phosphoserine). 2 positions are modified to phosphotyrosine: Y131 and Y142. A phosphoserine; by autocatalysis mark is found at S144 and S149. The interval 150–198 is disordered; sequence AEDYNSSNTLNVKTVSETPAVPPVSEDDEDDDDDATPPPVIAPRPEHTK. A compositionally biased stretch (polar residues) spans 152–166; sequence DYNSSNTLNVKTVSE. Phosphotyrosine; by JAK2 is present on Y153. S174 is subject to Phosphoserine. Acidic residues predominate over residues 174-184; the sequence is SEDDEDDDDDA. Phosphothreonine is present on T185. The residue at position 199 (S199) is a Phosphoserine; by autocatalysis. Position 201 is a phosphotyrosine; by JAK2 (Y201). S204 is modified (phosphoserine; by autocatalysis). Residues 210-250 form a disordered region; sequence PVTPTRDVATSPISPTENNTTPPDALTRNTEKQKKKPKMSD. 2 positions are modified to phosphothreonine: T212 and T219. S220 and S223 each carry phosphoserine. Residues 220–231 are compositionally biased toward polar residues; that stretch reads SPISPTENNTTP. 3 positions are modified to phosphothreonine: T225, T229, and T230. The 252-residue stretch at 270–521 folds into the Protein kinase domain; it reads YTPFEKIGQG…AKELLQHQFL (252 aa). 276 to 284 contributes to the ATP binding site; the sequence is IGQGASGTV. A Phosphotyrosine; by JAK2 modification is found at Y285. An ATP-binding site is contributed by K299. D389 serves as the catalytic Proton acceptor. T423 carries the post-translational modification Phosphothreonine; by autocatalysis, BRSK2 and PDPK1.

This sequence belongs to the protein kinase superfamily. STE Ser/Thr protein kinase family. STE20 subfamily. Homodimer in its autoinhibited state. Active as monomer. Interacts with GIT1. Component of cytoplasmic complexes, which also contains PXN, ARHGEF7 and GIT1. Interacts with NISCH. Interacts with DVL1; mediates the formation of a DVL1, MUSK and PAK1 ternary complex involved in AChR clustering. Binds to the caspase-cleaved p110 isoform of CDC2L1 and CDC2L2, p110C, but not the full-length proteins. Interacts with ARHGEF7. Interacts tightly with GTP-bound but not GDP-bound CDC42/P21 and RAC1. Interacts with SCRIB. Interacts with PDPK1. Interacts (via kinase domain) with RAF1. Interacts with NCK1 and NCK2. Interacts with TBCB. Interacts with BRSK2. Interacts with SNAI1. Interacts with CIB1 (via N-terminal region); the interaction is direct, promotes PAK1 activity and occurs in a calcium-dependent manner. Interacts with INPP5K. Interacts with gamma-tubulin. Interacts with RHOU; the interaction promotes PAK1 activation. Mg(2+) serves as cofactor. In terms of processing, autophosphorylated in trans, meaning that in a dimer, one kinase molecule phosphorylates the other one. Activated by autophosphorylation at Thr-423 in response to a conformation change, triggered by interaction with GTP-bound CDC42 or RAC1. Activated by phosphorylation at Thr-423 by BRSK2 and by PDPK1. Phosphorylated by JAK2 in response to PRL; this increases PAK1 kinase activity. Phosphorylated at Ser-21 by PKB/AKT; this reduces interaction with NCK1 and association with focal adhesion sites. Upon DNA damage, phosphorylated at Thr-212 and translocates to the nucleoplasm. Phosphorylated at tyrosine residues, which can be enhanced by NTN1.

The protein localises to the cytoplasm. It is found in the cell junction. Its subcellular location is the focal adhesion. It localises to the cell projection. The protein resides in the lamellipodium. The protein localises to the cell membrane. It is found in the ruffle membrane. Its subcellular location is the invadopodium. It localises to the nucleus. The protein resides in the nucleoplasm. The protein localises to the chromosome. It is found in the cytoskeleton. Its subcellular location is the microtubule organizing center. It localises to the centrosome. The enzyme catalyses L-seryl-[protein] + ATP = O-phospho-L-seryl-[protein] + ADP + H(+). It catalyses the reaction L-threonyl-[protein] + ATP = O-phospho-L-threonyl-[protein] + ADP + H(+). Its activity is regulated as follows. Phosphorylation of Thr-84 by OXSR1 inhibits activation. Activated by binding small G proteins. Binding of GTP-bound CDC42 or RAC1 to the autoregulatory region releases monomers from the autoinhibited dimer, and enables activation by phosphorylation of Thr-423. Its function is as follows. Protein kinase involved in intracellular signaling pathways downstream of integrins and receptor-type kinases that plays an important role in cytoskeleton dynamics, in cell adhesion, migration, proliferation, apoptosis, mitosis, and in vesicle-mediated transport processes. Can directly phosphorylate BAD and protects cells against apoptosis. Activated by interaction with CDC42 and RAC1. Functions as a GTPase effector that links the Rho-related GTPases CDC42 and RAC1 to the JNK MAP kinase pathway. Phosphorylates and activates MAP2K1, and thereby mediates activation of downstream MAP kinases. Involved in the reorganization of the actin cytoskeleton, actin stress fibers and of focal adhesion complexes. Phosphorylates the tubulin chaperone TBCB and thereby plays a role in the regulation of microtubule biogenesis and organization of the tubulin cytoskeleton. Plays a role in the regulation of insulin secretion in response to elevated glucose levels. Part of a ternary complex that contains PAK1, DVL1 and MUSK that is important for MUSK-dependent regulation of AChR clustering during the formation of the neuromuscular junction (NMJ). Activity is inhibited in cells undergoing apoptosis, potentially due to binding of CDC2L1 and CDC2L2. Phosphorylates MYL9/MLC2. Phosphorylates RAF1 at 'Ser-338' and 'Ser-339' resulting in: activation of RAF1, stimulation of RAF1 translocation to mitochondria, phosphorylation of BAD by RAF1, and RAF1 binding to BCL2. Phosphorylates SNAI1 at 'Ser-246' promoting its transcriptional repressor activity by increasing its accumulation in the nucleus. In podocytes, promotes NR3C2 nuclear localization. Required for atypical chemokine receptor ACKR2-induced phosphorylation of LIMK1 and cofilin (CFL1) and for the up-regulation of ACKR2 from endosomal compartment to cell membrane, increasing its efficiency in chemokine uptake and degradation. In synapses, seems to mediate the regulation of F-actin cluster formation performed by SHANK3, maybe through CFL1 phosphorylation and inactivation. Plays a role in RUFY3-mediated facilitating gastric cancer cells migration and invasion. In response to DNA damage, phosphorylates MORC2 which activates its ATPase activity and facilitates chromatin remodeling. In neurons, plays a crucial role in regulating GABA(A) receptor synaptic stability and hence GABAergic inhibitory synaptic transmission through its role in F-actin stabilization. In hippocampal neurons, necessary for the formation of dendritic spines and excitatory synapses; this function is dependent on kinase activity and may be exerted by the regulation of actomyosin contractility through the phosphorylation of myosin II regulatory light chain (MLC). Along with GIT1, positively regulates microtubule nucleation during interphase. Phosphorylates FXR1, promoting its localization to stress granules and activity. Phosphorylates ILK on 'Thr-173' and 'Ser-246', promoting nuclear export of ILK. This is Serine/threonine-protein kinase PAK 1 from Mus musculus (Mouse).